Consider the following 468-residue polypeptide: 6-phospho-beta-galactosidase (468 aa).

Residues Gln19, His116, Asn159, Glu160, and Asn297 each coordinate D-galactose 6-phosphate. The active-site Proton donor is Glu160. Glu375 serves as the catalytic Nucleophile. The D-galactose 6-phosphate site is built by Ser428, Trp429, Lys435, and Tyr437.

The protein belongs to the glycosyl hydrolase 1 family.

It catalyses the reaction a 6-phospho-beta-D-galactoside + H2O = D-galactose 6-phosphate + an alcohol. It functions in the pathway carbohydrate metabolism; lactose degradation; D-galactose 6-phosphate and beta-D-glucose from lactose 6-phosphate: step 1/1. The protein is 6-phospho-beta-galactosidase of Streptococcus gordonii (strain Challis / ATCC 35105 / BCRC 15272 / CH1 / DL1 / V288).